Consider the following 350-residue polypeptide: uncharacterized protein (350 aa).

The 164-residue stretch at 164-327 folds into the Integrase catalytic domain; that stretch reads NDPLPGYVEV…EKTRIGARVV (164 aa).

This is an uncharacterized protein from Sinorhizobium fredii (strain NBRC 101917 / NGR234).